An 87-amino-acid chain; its full sequence is Small ribosomal subunit protein bS16 (87 aa).

This sequence belongs to the bacterial ribosomal protein bS16 family.

This is Small ribosomal subunit protein bS16 from Onion yellows phytoplasma (strain OY-M).